The following is a 239-amino-acid chain: MNVSLFVTCLADIFYPGVGKDTVEVLERHGCNVKFPENQICCGQPAFNSGYHEDTKKAAKHTIETFADADYVVLPSGSCAAMLLEYKELFADDPEWEKRAEELASKTYELTQFLVRVLKVEDIGAVCHKKATYHTSCHMSRLLRETEAPFSLLEQVKGLELAPLANKESCCGFGGTFSVKMPAISEQMVEEKVGHIEATGADLLIGADCGCLMNIGGRIERNGKTIEVKHIAQVLNSKE.

Belongs to the LutA/YkgE family.

Functionally, is involved in L-lactate degradation and allows cells to grow with lactate as the sole carbon source. This Shouchella clausii (strain KSM-K16) (Alkalihalobacillus clausii) protein is Lactate utilization protein A.